A 309-amino-acid polypeptide reads, in one-letter code: Elongation factor Ts (309 aa).

Residues 82–85 are involved in Mg(2+) ion dislocation from EF-Tu; the sequence is TDFV.

It belongs to the EF-Ts family.

It localises to the cytoplasm. Associates with the EF-Tu.GDP complex and induces the exchange of GDP to GTP. It remains bound to the aminoacyl-tRNA.EF-Tu.GTP complex up to the GTP hydrolysis stage on the ribosome. In Rickettsia africae (strain ESF-5), this protein is Elongation factor Ts.